The chain runs to 1184 residues: PR domain zinc finger protein 10 (1184 aa).

Residues 122–162 (LDAKEEEEEEEDEDEDTEEEEEEDAEDTDVDDWQPDPPRPF) form a disordered region. Residues 125–155 (KEEEEEEEDEDEDTEEEEEEDAEDTDVDDWQ) show a composition bias toward acidic residues. The SET domain maps to 202 to 320 (LPLVLYIDRF…PKQELKVWYA (119 aa)). The segment at 221 to 325 (IPKRTQFGPV…KVWYAASYAE (105 aa)) is N-terminal PR domain; essential for transcriptional activator activity. A C2H2-type 1 zinc finger spans residues 349–371 (WPCYECNRRFISSEQLQQHLNSH). Lys374 is covalently cross-linked (Glycyl lysine isopeptide (Lys-Gly) (interchain with G-Cter in SUMO2)). Over residues 381–401 (TRGRGRGRGKRRFGPGRRPGR) the composition is skewed to basic residues. The disordered stretch occupies residues 381-405 (TRGRGRGRGKRRFGPGRRPGRPPKF). Ser418 is subject to Phosphoserine. Thr422 bears the Phosphothreonine mark. Residues 444-487 (GLDQPEQASIPIPQLPQETPPSLEQEPETHTLHLQPQQEESLVP) form a disordered region. The segment covering 475 to 487 (LHLQPQQEESLVP) has biased composition (polar residues). C2H2-type zinc fingers lie at residues 520–542 (FKCLQCGKAFREKDKLDQHLRFH), 550–572 (LTCDLCNKGFISSASLESHMKLH), 578–600 (YSCIFCPESFDRLDLLKDHVAIH), 606–629 (FTCPTCKKRFPDFIQVKKHVRSFH), 634–656 (YQCTECDKAFCRPDKLRLHMLRH), 662–685 (FLCSTCGKQFKRKDKLREHMQRMH), 717–740 (FKCRLCMMGFRRRGMLVNHLSKRH), and 850–873 (VCCPHCSKQYSSKTKMVQHIRKKH). Residues 917–1164 (QAMTELSQTL…TGPSQQQTTQ (248 aa)) form a C-terminal glutamine-rich region; essential for transcriptional activator activity region. The interval 1004 to 1054 (EPAPAAPSASQVAGQPLSPSAQQVQQGLSPSHIQGSSSTQGQALQQQQNSS) is disordered. Residues 1014 to 1036 (QVAGQPLSPSAQQVQQGLSPSHI) show a composition bias toward polar residues. Over residues 1037-1054 (QGSSSTQGQALQQQQNSS) the composition is skewed to low complexity.

It belongs to the class V-like SAM-binding methyltransferase superfamily. As to expression, present in brain, liver, kidney, spleen and thymus (at protein level).

It localises to the nucleus. In terms of biological role, transcriptional activator, essential for early embryonic development and survival of embryonic stem cells (ESCs). Supports cell growth and survival during early development by transcriptionally activating the expression of the translation initiation factor EIF3B, to sustain global translation. Activates the transcription of FLNC. The polypeptide is PR domain zinc finger protein 10 (Prdm10) (Mus musculus (Mouse)).